The following is a 1174-amino-acid chain: HEAT repeat-containing protein 6 (1174 aa).

Residues 168–207 form an HEAT 1 repeat; the sequence is NELLGPTGILVNLCDPSQPDPELWREAIHCMANLCLGVPG. Disordered regions lie at residues 304–346 and 373–392; these read GRSP…EELK and LGPQKSPLDPHQGQVGKDHF. Over residues 323-335 the composition is skewed to basic residues; it reads SKKKRKAGKQKKG. A compositionally biased stretch (basic and acidic residues) spans 336–346; it reads HQGEESKEELK. HEAT repeat units follow at residues 460–498, 523–560, and 566–603; these read GIGSPQSVSLMTIALKDSSPKTRACALQVLSAILDGSKQ, SIRELHRCLLLAIVAESSAQTLTQIIKCLANLVSNAPY, and GLLTRVWNQIKPYIRNKDVNVRVSSLTLLGAIVSAQVS. The interval 619 to 648 is disordered; that stretch reads SQNSGSATPSDPESNRKESMLEGGKKNGLH. Over residues 631–648 the composition is skewed to basic and acidic residues; that stretch reads ESNRKESMLEGGKKNGLH.

The sequence is that of HEAT repeat-containing protein 6 (heatr6) from Xenopus laevis (African clawed frog).